Reading from the N-terminus, the 323-residue chain is tRNA N6-adenosine threonylcarbamoyltransferase (323 aa).

3 residues coordinate Fe cation: His106, His110, and Tyr127. Residues 127–131 (YVSGA), Asp159, Gly172, Glu176, and Asn255 contribute to the substrate site. Fe cation is bound at residue Asp283.

The protein belongs to the KAE1 / TsaD family. As to quaternary structure, monomer. Component of the KEOPS complex that consists of Kae1, Bud32, Cgi121 and Pcc1; the whole complex dimerizes. The cofactor is Fe(2+).

The protein resides in the cytoplasm. It carries out the reaction L-threonylcarbamoyladenylate + adenosine(37) in tRNA = N(6)-L-threonylcarbamoyladenosine(37) in tRNA + AMP + H(+). Required for the formation of a threonylcarbamoyl group on adenosine at position 37 (t(6)A37) in tRNAs that read codons beginning with adenine. Is a component of the KEOPS complex that is probably involved in the transfer of the threonylcarbamoyl moiety of threonylcarbamoyl-AMP (TC-AMP) to the N6 group of A37. Kae1 likely plays a direct catalytic role in this reaction, but requires other protein(s) of the complex to fulfill this activity. This chain is tRNA N6-adenosine threonylcarbamoyltransferase, found in Methanocella arvoryzae (strain DSM 22066 / NBRC 105507 / MRE50).